We begin with the raw amino-acid sequence, 140 residues long: Nucleoside diphosphate kinase (140 aa).

Lys11, Phe59, Arg87, Thr93, Arg104, and Asn114 together coordinate ATP. The active-site Pros-phosphohistidine intermediate is the His117.

The protein belongs to the NDK family. As to quaternary structure, homotetramer. Mg(2+) is required as a cofactor.

It localises to the cytoplasm. The enzyme catalyses a 2'-deoxyribonucleoside 5'-diphosphate + ATP = a 2'-deoxyribonucleoside 5'-triphosphate + ADP. It carries out the reaction a ribonucleoside 5'-diphosphate + ATP = a ribonucleoside 5'-triphosphate + ADP. Its function is as follows. Major role in the synthesis of nucleoside triphosphates other than ATP. The ATP gamma phosphate is transferred to the NDP beta phosphate via a ping-pong mechanism, using a phosphorylated active-site intermediate. This is Nucleoside diphosphate kinase from Francisella tularensis subsp. mediasiatica (strain FSC147).